The chain runs to 261 residues: Hemin import ATP-binding protein HmuV (261 aa).

The region spanning 5-241 (LTANAASFAI…DLLARVFDVD (237 aa)) is the ABC transporter domain. Position 37-44 (37-44 (GPNGAGKS)) interacts with ATP.

This sequence belongs to the ABC transporter superfamily. Heme (hemin) importer (TC 3.A.1.14.5) family. In terms of assembly, the complex is composed of two ATP-binding proteins (HmuV), two transmembrane proteins (HmuU) and a solute-binding protein (HmuT).

Its subcellular location is the cell inner membrane. Functionally, part of the ABC transporter complex HmuTUV involved in hemin import. Responsible for energy coupling to the transport system. The polypeptide is Hemin import ATP-binding protein HmuV (Rhodopseudomonas palustris (strain BisB5)).